The following is a 330-amino-acid chain: Biotin synthase (330 aa).

The 227-residue stretch at 42–268 (YYGRKVKLNM…INPSKEIRIA (227 aa)) folds into the Radical SAM core domain. [4Fe-4S] cluster contacts are provided by cysteine 60, cysteine 64, and cysteine 67. 4 residues coordinate [2Fe-2S] cluster: cysteine 103, cysteine 136, cysteine 196, and arginine 266.

It belongs to the radical SAM superfamily. Biotin synthase family. As to quaternary structure, homodimer. The cofactor is [4Fe-4S] cluster. It depends on [2Fe-2S] cluster as a cofactor.

It carries out the reaction (4R,5S)-dethiobiotin + (sulfur carrier)-SH + 2 reduced [2Fe-2S]-[ferredoxin] + 2 S-adenosyl-L-methionine = (sulfur carrier)-H + biotin + 2 5'-deoxyadenosine + 2 L-methionine + 2 oxidized [2Fe-2S]-[ferredoxin]. It functions in the pathway cofactor biosynthesis; biotin biosynthesis; biotin from 7,8-diaminononanoate: step 2/2. In terms of biological role, catalyzes the conversion of dethiobiotin (DTB) to biotin by the insertion of a sulfur atom into dethiobiotin via a radical-based mechanism. In Macrococcus caseolyticus (strain JCSC5402) (Macrococcoides caseolyticum), this protein is Biotin synthase.